The sequence spans 90 residues: Cell division topological specificity factor (90 aa).

It belongs to the MinE family.

In terms of biological role, prevents the cell division inhibition by proteins MinC and MinD at internal division sites while permitting inhibition at polar sites. This ensures cell division at the proper site by restricting the formation of a division septum at the midpoint of the long axis of the cell. The protein is Cell division topological specificity factor of Clostridium perfringens (strain ATCC 13124 / DSM 756 / JCM 1290 / NCIMB 6125 / NCTC 8237 / Type A).